Reading from the N-terminus, the 63-residue chain is UPF0391 membrane protein lpg2415 (63 aa).

Helical transmembrane passes span 4–24 (WALI…RGVA) and 33–53 (VLFF…LLGG).

Belongs to the UPF0391 family.

It localises to the cell membrane. This Legionella pneumophila subsp. pneumophila (strain Philadelphia 1 / ATCC 33152 / DSM 7513) protein is UPF0391 membrane protein lpg2415.